Reading from the N-terminus, the 579-residue chain is Tricyclene synthase 0e23, chloroplastic (579 aa).

The transit peptide at 1–66 (MAFCISYLGA…ALCLNAHSTS (66 aa)) directs the protein to the chloroplast. N-linked (GlcNAc...) asparagine glycans are attached at residues asparagine 27, asparagine 204, and asparagine 317. Mg(2+)-binding residues include aspartate 336 and aspartate 340. The DDXXD motif signature appears at 336-340 (DDIFD). Residues asparagine 382 and asparagine 463 are each glycosylated (N-linked (GlcNAc...) asparagine). Positions 480 and 488 each coordinate Mg(2+). Asparagine 507 carries an N-linked (GlcNAc...) asparagine glycan.

It belongs to the terpene synthase family. Tpsg subfamily. Mg(2+) serves as cofactor. The cofactor is Mn(2+). Accumulates in flowers; mostly expressed in both upper and lower petal lobes, and, to a lower extent, in tube and stamens.

The protein localises to the plastid. The protein resides in the chloroplast stroma. The catalysed reaction is (2E)-geranyl diphosphate = tricyclene + diphosphate. The enzyme catalyses (2E)-geranyl diphosphate = (E)-beta-ocimene + diphosphate. It functions in the pathway secondary metabolite biosynthesis; terpenoid biosynthesis. Its function is as follows. Contributes to floral scent emission. The chain is Tricyclene synthase 0e23, chloroplastic (0e23) from Antirrhinum majus (Garden snapdragon).